A 313-amino-acid chain; its full sequence is MAMAERPRPGWASYHNPNTNSCQDLGNSILLLLGLIICINIGINMVTLLWRRLRGFLHQVFRVICEKEASKLRSPGKQTQPSKHSSPAVHLRCTMDAVKMTVTPPPTRRRHRRGSSSRRARRPVAWAPDTDDDDDEKPPHQHTAACSHNWDYPEDWEGLQTAQRFWTPWAQDTLEPPTQTIRFQQTIEGRPLKREMQSDLGLEAYVYPVNPPLPSPQILSHKNSGGGAGAGAQAEQEQCAPAEPPILGPANVPDIPRRRSSGRVTYDARDVRRRLRELTREVEALSHCYPLASGSSTAEGTRKDWVYRSMTER.

The helical transmembrane segment at isoleucine 29 to leucine 49 threads the bilayer. Disordered regions lie at residues lysine 71 to histidine 90, alanine 97 to aspartate 151, glutamate 243 to arginine 263, and leucine 291 to arginine 313. Polar residues predominate over residues glycine 76–serine 85. Residues threonine 107 to arginine 122 show a composition bias toward basic residues. Residues arginine 263–tyrosine 289 adopt a coiled-coil conformation. A compositionally biased stretch (basic and acidic residues) spans glycine 300 to arginine 313.

It localises to the membrane. Its subcellular location is the cytoplasm. Its function is as follows. Required for proper cytoplasm removal during spermatogenesis. The sequence is that of Spermatid maturation protein 1 (SPEM1) from Bos taurus (Bovine).